We begin with the raw amino-acid sequence, 221 residues long: Imidazole glycerol phosphate synthase subunit HisH (221 aa).

The 213-residue stretch at 9–221 (DVVIIDTGCA…QILGNFLKMQ (213 aa)) folds into the Glutamine amidotransferase type-1 domain. Residue Cys84 is the Nucleophile of the active site. Catalysis depends on residues His202 and Glu204.

Heterodimer of HisH and HisF.

It localises to the cytoplasm. It carries out the reaction 5-[(5-phospho-1-deoxy-D-ribulos-1-ylimino)methylamino]-1-(5-phospho-beta-D-ribosyl)imidazole-4-carboxamide + L-glutamine = D-erythro-1-(imidazol-4-yl)glycerol 3-phosphate + 5-amino-1-(5-phospho-beta-D-ribosyl)imidazole-4-carboxamide + L-glutamate + H(+). It catalyses the reaction L-glutamine + H2O = L-glutamate + NH4(+). The protein operates within amino-acid biosynthesis; L-histidine biosynthesis; L-histidine from 5-phospho-alpha-D-ribose 1-diphosphate: step 5/9. In terms of biological role, IGPS catalyzes the conversion of PRFAR and glutamine to IGP, AICAR and glutamate. The HisH subunit catalyzes the hydrolysis of glutamine to glutamate and ammonia as part of the synthesis of IGP and AICAR. The resulting ammonia molecule is channeled to the active site of HisF. The chain is Imidazole glycerol phosphate synthase subunit HisH from Shewanella oneidensis (strain ATCC 700550 / JCM 31522 / CIP 106686 / LMG 19005 / NCIMB 14063 / MR-1).